Reading from the N-terminus, the 294-residue chain is Acetyl-coenzyme A carboxylase carboxyl transferase subunit beta (294 aa).

The region spanning L29–A294 is the CoA carboxyltransferase N-terminal domain. Zn(2+) is bound by residues C33, C36, C52, and C55. The segment at C33–C55 adopts a C4-type zinc-finger fold.

It belongs to the AccD/PCCB family. As to quaternary structure, acetyl-CoA carboxylase is a heterohexamer composed of biotin carboxyl carrier protein (AccB), biotin carboxylase (AccC) and two subunits each of ACCase subunit alpha (AccA) and ACCase subunit beta (AccD). It depends on Zn(2+) as a cofactor.

The protein resides in the cytoplasm. It catalyses the reaction N(6)-carboxybiotinyl-L-lysyl-[protein] + acetyl-CoA = N(6)-biotinyl-L-lysyl-[protein] + malonyl-CoA. The protein operates within lipid metabolism; malonyl-CoA biosynthesis; malonyl-CoA from acetyl-CoA: step 1/1. Its function is as follows. Component of the acetyl coenzyme A carboxylase (ACC) complex. Biotin carboxylase (BC) catalyzes the carboxylation of biotin on its carrier protein (BCCP) and then the CO(2) group is transferred by the transcarboxylase to acetyl-CoA to form malonyl-CoA. This is Acetyl-coenzyme A carboxylase carboxyl transferase subunit beta from Prochlorococcus marinus (strain NATL1A).